The primary structure comprises 208 residues: Fibroblast growth factor 10 (208 aa).

The N-terminal stretch at 1–37 is a signal peptide; the sequence is MWKWILTHCASAFPHLPGCCCCCFLLLFLVSSVPVTC. Residues asparagine 51 and asparagine 196 are each glycosylated (N-linked (GlcNAc...) asparagine).

This sequence belongs to the heparin-binding growth factors family. In terms of assembly, interacts with FGFR1 and FGFR2. Interacts with FGFBP1.

The protein localises to the secreted. Plays an important role in the regulation of embryonic development, cell proliferation and cell differentiation. Required for normal branching morphogenesis. May play a role in wound healing. This chain is Fibroblast growth factor 10 (FGF10), found in Homo sapiens (Human).